The primary structure comprises 138 residues: Small ribosomal subunit protein uS11c (138 aa).

The disordered stretch occupies residues 1 to 22 (MAKPIPKIGSRKNARSGSRKHL). Residues 9 to 22 (GSRKNARSGSRKHL) are compositionally biased toward basic residues.

It belongs to the universal ribosomal protein uS11 family. As to quaternary structure, part of the 30S ribosomal subunit.

The protein localises to the plastid. It localises to the chloroplast. This chain is Small ribosomal subunit protein uS11c, found in Lotus japonicus (Lotus corniculatus var. japonicus).